The primary structure comprises 185 residues: ATP synthase subunit b (185 aa).

Residues 26–46 traverse the membrane as a helical segment; the sequence is LVLIGFAILLFIVIKFVVPMF.

The protein belongs to the ATPase B chain family. F-type ATPases have 2 components, F(1) - the catalytic core - and F(0) - the membrane proton channel. F(1) has five subunits: alpha(3), beta(3), gamma(1), delta(1), epsilon(1). F(0) has three main subunits: a(1), b(2) and c(10-14). The alpha and beta chains form an alternating ring which encloses part of the gamma chain. F(1) is attached to F(0) by a central stalk formed by the gamma and epsilon chains, while a peripheral stalk is formed by the delta and b chains.

It localises to the cell membrane. F(1)F(0) ATP synthase produces ATP from ADP in the presence of a proton or sodium gradient. F-type ATPases consist of two structural domains, F(1) containing the extramembraneous catalytic core and F(0) containing the membrane proton channel, linked together by a central stalk and a peripheral stalk. During catalysis, ATP synthesis in the catalytic domain of F(1) is coupled via a rotary mechanism of the central stalk subunits to proton translocation. In terms of biological role, component of the F(0) channel, it forms part of the peripheral stalk, linking F(1) to F(0). This is ATP synthase subunit b from Renibacterium salmoninarum (strain ATCC 33209 / DSM 20767 / JCM 11484 / NBRC 15589 / NCIMB 2235).